A 234-amino-acid chain; its full sequence is Large ribosomal subunit protein uL1 (234 aa).

It belongs to the universal ribosomal protein uL1 family. In terms of assembly, part of the 50S ribosomal subunit.

Its function is as follows. Binds directly to 23S rRNA. The L1 stalk is quite mobile in the ribosome, and is involved in E site tRNA release. Functionally, protein L1 is also a translational repressor protein, it controls the translation of the L11 operon by binding to its mRNA. The chain is Large ribosomal subunit protein uL1 from Salmonella agona (strain SL483).